Here is a 738-residue protein sequence, read N- to C-terminus: Ent-kaurene synthase-like 1 (738 aa).

Aspartate 487, aspartate 491, asparagine 631, aspartate 632, and glutamate 639 together coordinate Mg(2+). The short motif at 487 to 491 (DDFFD) is the DDXXD motif element.

Belongs to the terpene synthase family. It depends on Mg(2+) as a cofactor.

It carries out the reaction ent-copalyl diphosphate = ent-kaur-16-ene + diphosphate. Its pathway is secondary metabolite biosynthesis; terpenoid biosynthesis. Its function is as follows. Diterpene cyclase involved in the biosynthesis of labdane-related diterpenoids (LRDs) natural products. Catalyzes the cyclization of ent-CDP into ent-kaurene. This is Ent-kaurene synthase-like 1 from Ricinus communis (Castor bean).